The sequence spans 199 residues: ATP-dependent Clp protease proteolytic subunit (199 aa).

Residue Ser103 is the Nucleophile of the active site. The active site involves His128.

This sequence belongs to the peptidase S14 family. In terms of assembly, fourteen ClpP subunits assemble into 2 heptameric rings which stack back to back to give a disk-like structure with a central cavity, resembling the structure of eukaryotic proteasomes.

The protein resides in the cytoplasm. It catalyses the reaction Hydrolysis of proteins to small peptides in the presence of ATP and magnesium. alpha-casein is the usual test substrate. In the absence of ATP, only oligopeptides shorter than five residues are hydrolyzed (such as succinyl-Leu-Tyr-|-NHMec, and Leu-Tyr-Leu-|-Tyr-Trp, in which cleavage of the -Tyr-|-Leu- and -Tyr-|-Trp bonds also occurs).. In terms of biological role, cleaves peptides in various proteins in a process that requires ATP hydrolysis. Has a chymotrypsin-like activity. Plays a major role in the degradation of misfolded proteins. The polypeptide is ATP-dependent Clp protease proteolytic subunit (Photobacterium profundum (strain SS9)).